Here is a 357-residue protein sequence, read N- to C-terminus: Phosphoribosylformylglycinamidine cyclo-ligase (357 aa).

The protein belongs to the AIR synthase family.

Its subcellular location is the cytoplasm. It catalyses the reaction 2-formamido-N(1)-(5-O-phospho-beta-D-ribosyl)acetamidine + ATP = 5-amino-1-(5-phospho-beta-D-ribosyl)imidazole + ADP + phosphate + H(+). Its pathway is purine metabolism; IMP biosynthesis via de novo pathway; 5-amino-1-(5-phospho-D-ribosyl)imidazole from N(2)-formyl-N(1)-(5-phospho-D-ribosyl)glycinamide: step 2/2. In Rhizobium rhizogenes (strain K84 / ATCC BAA-868) (Agrobacterium radiobacter), this protein is Phosphoribosylformylglycinamidine cyclo-ligase.